A 171-amino-acid chain; its full sequence is Galectin-related protein A (171 aa).

Positions 38–170 (PFCGHIKGGL…INGDLQLTKL (133 aa)) constitute a Galectin domain.

Its function is as follows. Does not bind lactose, and may not bind carbohydrates. This is Galectin-related protein A (lgalsl-a) from Xenopus laevis (African clawed frog).